Reading from the N-terminus, the 347-residue chain is Protein RecA (347 aa).

Glycine 68–threonine 75 is an ATP binding site.

Belongs to the RecA family.

It is found in the cytoplasm. In terms of biological role, can catalyze the hydrolysis of ATP in the presence of single-stranded DNA, the ATP-dependent uptake of single-stranded DNA by duplex DNA, and the ATP-dependent hybridization of homologous single-stranded DNAs. It interacts with LexA causing its activation and leading to its autocatalytic cleavage. This is Protein RecA from Rhodococcus jostii (strain RHA1).